The sequence spans 299 residues: Putative peptidyl-prolyl cis-trans isomerase jhp_0161 (299 aa).

A signal peptide spans 1–21 (MKKNILNLALVGALSASFLMA). A PpiC domain is found at 154–253 (KQEAHARHIL…FGYHIIYLIS (100 aa)).

It carries out the reaction [protein]-peptidylproline (omega=180) = [protein]-peptidylproline (omega=0). This chain is Putative peptidyl-prolyl cis-trans isomerase jhp_0161, found in Helicobacter pylori (strain J99 / ATCC 700824) (Campylobacter pylori J99).